The sequence spans 126 residues: Small ribosomal subunit protein uS13c (126 aa).

A disordered region spans residues 97-126 (PLRGQRTRTNARTRRGGKKTVAGKKKAPRK). The span at 101-126 (QRTRTNARTRRGGKKTVAGKKKAPRK) shows a compositional bias: basic residues.

It belongs to the universal ribosomal protein uS13 family. In terms of assembly, part of the 30S ribosomal subunit.

It localises to the plastid. Its subcellular location is the chloroplast. Its function is as follows. Located at the top of the head of the 30S subunit, it contacts several helices of the 16S rRNA. This Porphyra purpurea (Red seaweed) protein is Small ribosomal subunit protein uS13c.